The primary structure comprises 449 residues: N-succinylarginine dihydrolase (449 aa).

Substrate-binding positions include 19-28 (GGLSYGNVAS), Asn110, and 137-138 (HR). The segment at 23–43 (YGNVASQSNSQQGSNPREAAR) is disordered. Polar residues predominate over residues 25 to 37 (NVASQSNSQQGSN). Residue Glu174 is part of the active site. Substrate is bound at residue Arg214. His250 is an active-site residue. Substrate contacts are provided by Asp252 and Asn365. The active-site Nucleophile is the Cys371.

This sequence belongs to the succinylarginine dihydrolase family. In terms of assembly, homodimer.

The catalysed reaction is N(2)-succinyl-L-arginine + 2 H2O + 2 H(+) = N(2)-succinyl-L-ornithine + 2 NH4(+) + CO2. It participates in amino-acid degradation; L-arginine degradation via AST pathway; L-glutamate and succinate from L-arginine: step 2/5. In terms of biological role, catalyzes the hydrolysis of N(2)-succinylarginine into N(2)-succinylornithine, ammonia and CO(2). This Pseudomonas putida (strain GB-1) protein is N-succinylarginine dihydrolase.